The chain runs to 382 residues: Ribosomal RNA large subunit methyltransferase G (382 aa).

This sequence belongs to the methyltransferase superfamily. RlmG family.

The protein localises to the cytoplasm. The catalysed reaction is guanosine(1835) in 23S rRNA + S-adenosyl-L-methionine = N(2)-methylguanosine(1835) in 23S rRNA + S-adenosyl-L-homocysteine + H(+). Its function is as follows. Specifically methylates the guanine in position 1835 (m2G1835) of 23S rRNA. The chain is Ribosomal RNA large subunit methyltransferase G from Aliivibrio fischeri (strain MJ11) (Vibrio fischeri).